Consider the following 500-residue polypeptide: Carnosic acid synthase (500 aa).

The chain crosses the membrane as a helical span at residues 4 to 24 (LILLSLAFLASCVVAYSRRRP). Cys-443 contributes to the heme binding site.

This sequence belongs to the cytochrome P450 family. It depends on heme as a cofactor. As to expression, expressed in leaf glandular trichomes.

It is found in the membrane. It catalyses the reaction 11-hydroxyferruginol + 3 reduced [NADPH--hemoprotein reductase] + 3 O2 = carnosate + 3 oxidized [NADPH--hemoprotein reductase] + 4 H2O + 4 H(+). It carries out the reaction miltiradiene + 2 reduced [NADPH--hemoprotein reductase] + 2 O2 = miltiradien-20-al + 2 oxidized [NADPH--hemoprotein reductase] + 3 H2O + 2 H(+). The enzyme catalyses ferruginol + 3 reduced [NADPH--hemoprotein reductase] + 3 O2 = pisiferate + 3 oxidized [NADPH--hemoprotein reductase] + 4 H2O + 4 H(+). It functions in the pathway secondary metabolite biosynthesis; terpenoid biosynthesis. Its function is as follows. Monooxygenase involved in the biosynthesis of carnosate, a potent antioxidant labdane-related diterpene natural product. Catalyzes the oxidation of 11-hydroxyferruginol to produce carnosate. Mediates the conversion of miltiradien into miltiradien-20-al. Also involved in the production of pisiferic acid and derivative products from ferruginol. This Salvia pomifera (Apple sage) protein is Carnosic acid synthase.